We begin with the raw amino-acid sequence, 632 residues long: ATP-dependent zinc metalloprotease FtsH (632 aa).

The Cytoplasmic segment spans residues 1-9 (MKPTNEPKK). The chain crosses the membrane as a helical span at residues 10-30 (PFFQSPIVLAVLGGILLIFFL). Over 31–116 (RSFNSDGSFS…INYSGFSESN (86 aa)) the chain is Periplasmic. A helical transmembrane segment spans residues 117–137 (FFTDMLGWLMPILVILGLWMF). At 138–632 (MANRMQKNMG…RLIPLEEQAS (495 aa)) the chain is on the cytoplasmic side. 210–217 (GPPGTGKT) contacts ATP. A Zn(2+)-binding site is contributed by H434. Residue E435 is part of the active site. 2 residues coordinate Zn(2+): H438 and D511.

This sequence in the central section; belongs to the AAA ATPase family. The protein in the C-terminal section; belongs to the peptidase M41 family. Homohexamer. Requires Zn(2+) as cofactor.

It is found in the cell inner membrane. Acts as a processive, ATP-dependent zinc metallopeptidase for both cytoplasmic and membrane proteins. Plays a role in the quality control of integral membrane proteins. The polypeptide is ATP-dependent zinc metalloprotease FtsH (Helicobacter pylori (strain J99 / ATCC 700824) (Campylobacter pylori J99)).